The sequence spans 360 residues: Isopentenyl-diphosphate delta-isomerase (360 aa).

12–13 (RK) contacts substrate. FMN is bound by residues 69 to 71 (SMT), Ser99, and Asn130. 99–101 (SQR) lines the substrate pocket. Gln164 provides a ligand contact to substrate. Glu165 serves as a coordination point for Mg(2+). Residues Lys196, Thr226, 277–279 (GVR), and 298–299 (AK) each bind FMN.

This sequence belongs to the IPP isomerase type 2 family. In terms of assembly, homooctamer. Dimer of tetramers. The cofactor is FMN. It depends on NADPH as a cofactor. Mg(2+) serves as cofactor.

Its subcellular location is the cytoplasm. The catalysed reaction is isopentenyl diphosphate = dimethylallyl diphosphate. Its function is as follows. Involved in the biosynthesis of isoprenoids. Catalyzes the 1,3-allylic rearrangement of the homoallylic substrate isopentenyl (IPP) to its allylic isomer, dimethylallyl diphosphate (DMAPP). In Halobacterium salinarum (strain ATCC 700922 / JCM 11081 / NRC-1) (Halobacterium halobium), this protein is Isopentenyl-diphosphate delta-isomerase.